The chain runs to 376 residues: Chlorophyll synthase, chloroplastic (376 aa).

A chloroplast-targeting transit peptide spans 1–47 (MATSHLLAAASSTAASSATFRPPLLSLRSPPPSSLRLNRRRHFQVVR). A disordered region spans residues 48–69 (AAETDKETKANAPEKAPAGGSS). 8 helical membrane-spanning segments follow: residues 95 to 115 (PVTW…SGNF), 171 to 191 (VITQ…LLDV), 197 to 217 (FPII…YSAP), 230 to 250 (FALG…LFGT), 255 to 275 (IVVL…VNDF), 300 to 320 (WICV…LFSS), 325 to 345 (YALA…QYFL), and 355 to 375 (YQAS…LATS).

It belongs to the UbiA prenyltransferase family. Chlorophyll synthase subfamily.

The protein localises to the plastid. Its subcellular location is the chloroplast membrane. The enzyme catalyses phytyl diphosphate + chlorophyllide a + H(+) = chlorophyll a + diphosphate. Its function is as follows. Involved in one of the last steps of the biosynthesis of chlorophyll a. In Oryza sativa subsp. japonica (Rice), this protein is Chlorophyll synthase, chloroplastic (CHLG).